A 133-amino-acid polypeptide reads, in one-letter code: CDGSH iron-sulfur domain-containing protein 2 homolog (133 aa).

At 1–35 the chain is on the lumenal side; sequence MEPISHLVKSSLPNYLSSLPIPDSIGGWFKLSFKD. Residues 36-58 traverse the membrane as a helical segment; sequence WLALIPPTVVVAGLGYTAYLAYC. Residues 59-133 lie on the Cytoplasmic side of the membrane; it reads PAAQGSCSAK…DNVGPIVIKK (75 aa). C100, C102, C111, and H115 together coordinate [2Fe-2S] cluster.

Belongs to the CISD protein family. CISD2 subfamily. [2Fe-2S] cluster is required as a cofactor.

It localises to the endoplasmic reticulum membrane. This is CDGSH iron-sulfur domain-containing protein 2 homolog from Drosophila erecta (Fruit fly).